We begin with the raw amino-acid sequence, 306 residues long: Uracil phosphoribosyltransferase homolog (306 aa).

Disordered regions lie at residues 1–28 and 58–87; these read MATE…NPEP and SSVP…NYDA. 2 stretches are compositionally biased toward polar residues: residues 13 to 28 and 70 to 79; these read CHNQ…NPEP and GGATFNSENN. GTP-binding positions include R130, R139, and 173 to 176; that span reads EKGN. Residue R183 participates in 5-phospho-alpha-D-ribose 1-diphosphate binding. Positions 200 and 229 each coordinate GTP. 235–243 serves as a coordination point for 5-phospho-alpha-D-ribose 1-diphosphate; sequence YPILSTGNT. 296 to 298 contacts uracil; it reads THF.

This sequence belongs to the UPRTase family.

It is found in the cytoplasm. The protein resides in the nucleus. The polypeptide is Uracil phosphoribosyltransferase homolog (UPRT) (Bos taurus (Bovine)).